Consider the following 389-residue polypeptide: Chorismate synthase (389 aa).

Residues arginine 40 and arginine 46 each coordinate NADP(+). FMN contacts are provided by residues 131 to 133 (RSS), 252 to 253 (NA), glycine 297, 312 to 316 (KPIPT), and arginine 338.

It belongs to the chorismate synthase family. As to quaternary structure, homotetramer. FMNH2 serves as cofactor.

The enzyme catalyses 5-O-(1-carboxyvinyl)-3-phosphoshikimate = chorismate + phosphate. It participates in metabolic intermediate biosynthesis; chorismate biosynthesis; chorismate from D-erythrose 4-phosphate and phosphoenolpyruvate: step 7/7. Catalyzes the anti-1,4-elimination of the C-3 phosphate and the C-6 proR hydrogen from 5-enolpyruvylshikimate-3-phosphate (EPSP) to yield chorismate, which is the branch point compound that serves as the starting substrate for the three terminal pathways of aromatic amino acid biosynthesis. This reaction introduces a second double bond into the aromatic ring system. The chain is Chorismate synthase from Lactiplantibacillus plantarum (strain ATCC BAA-793 / NCIMB 8826 / WCFS1) (Lactobacillus plantarum).